The chain runs to 429 residues: Enolase (429 aa).

Gln163 is a (2R)-2-phosphoglycerate binding site. Residue Glu205 is the Proton donor of the active site. 3 residues coordinate Mg(2+): Asp242, Glu285, and Asp312. (2R)-2-phosphoglycerate-binding residues include Lys337, Arg366, Ser367, and Lys388. The active-site Proton acceptor is Lys337.

Belongs to the enolase family. Mg(2+) is required as a cofactor.

The protein resides in the cytoplasm. It is found in the secreted. It localises to the cell surface. The catalysed reaction is (2R)-2-phosphoglycerate = phosphoenolpyruvate + H2O. Its pathway is carbohydrate degradation; glycolysis; pyruvate from D-glyceraldehyde 3-phosphate: step 4/5. Its function is as follows. Catalyzes the reversible conversion of 2-phosphoglycerate (2-PG) into phosphoenolpyruvate (PEP). It is essential for the degradation of carbohydrates via glycolysis. The sequence is that of Enolase from Methylorubrum extorquens (strain PA1) (Methylobacterium extorquens).